The following is a 432-amino-acid chain: Guanine/hypoxanthine permease PbuO (432 aa).

10 helical membrane passes run 15–35 (IIAG…NPVI), 51–71 (IIAS…PIAI), 92–112 (GITY…FIIL), 133–153 (ITTG…GIVA), 174–194 (LVGL…ALFI), 196–216 (MAAT…KGFM), 234–254 (FGDV…LVTI), 340–360 (ALSG…SLMM), 379–399 (LVIL…LGFI), and 412–432 (REIH…LFIL).

The protein belongs to the nucleobase:cation symporter-2 (NCS2) (TC 2.A.40) family. Azg-like subfamily.

It localises to the cell membrane. Its function is as follows. Involved in the uptake of the purine bases hypoxanthine and guanine. May work at purine concentrations higher than 100 uM. The chain is Guanine/hypoxanthine permease PbuO (pbuO) from Bacillus subtilis (strain 168).